The following is a 476-amino-acid chain: Cysteine--tRNA ligase (476 aa).

C28 lines the Zn(2+) pocket. A 'HIGH' region motif is present at residues 30–40 (PTVYDHTHLGH). Zn(2+)-binding residues include C208, H233, and E237. The short motif at 265–269 (KMSKS) is the 'KMSKS' region element. Residue K268 participates in ATP binding.

Belongs to the class-I aminoacyl-tRNA synthetase family. Requires Zn(2+) as cofactor.

The protein resides in the cytoplasm. The enzyme catalyses tRNA(Cys) + L-cysteine + ATP = L-cysteinyl-tRNA(Cys) + AMP + diphosphate. The polypeptide is Cysteine--tRNA ligase (Methanococcus maripaludis (strain C7 / ATCC BAA-1331)).